Reading from the N-terminus, the 439-residue chain is Xaa-Pro dipeptidase (439 aa).

Mn(2+) contacts are provided by D244, D255, H335, E380, and E419.

This sequence belongs to the peptidase M24B family. Bacterial-type prolidase subfamily. It depends on Mn(2+) as a cofactor.

The catalysed reaction is Xaa-L-Pro dipeptide + H2O = an L-alpha-amino acid + L-proline. In terms of biological role, splits dipeptides with a prolyl residue in the C-terminal position. The sequence is that of Xaa-Pro dipeptidase from Shewanella sp. (strain ANA-3).